The primary structure comprises 802 residues: Lon protease (802 aa).

Positions 17–211 (SIVMPLFEVV…LFLHILTKHK (195 aa)) constitute a Lon N-terminal domain. 363-370 (GPPGTGKT) lines the ATP pocket. The Lon proteolytic domain occupies 600 to 780 (ENVPGVVTGL…EEVLREALDI (181 aa)). Active-site residues include serine 686 and lysine 729.

This sequence belongs to the peptidase S16 family. In terms of assembly, homohexamer. Organized in a ring with a central cavity.

The protein localises to the cytoplasm. The enzyme catalyses Hydrolysis of proteins in presence of ATP.. ATP-dependent serine protease that mediates the selective degradation of mutant and abnormal proteins as well as certain short-lived regulatory proteins. Required for cellular homeostasis and for survival from DNA damage and developmental changes induced by stress. Degrades polypeptides processively to yield small peptide fragments that are 5 to 10 amino acids long. Binds to DNA in a double-stranded, site-specific manner. The polypeptide is Lon protease (Methanosarcina barkeri (strain Fusaro / DSM 804)).